The sequence spans 462 residues: MEKAIQRQRVLLEHLQPIRHHTHDHSSSLTTSICAAGDSAAYQRTAAFGDDVVIVAAYRTAICKSKRGGFKDTLSDDLLAPVLKAVIEKTNLDPKEVGDIVVGTVLAPGSIRAMECRMAAFYAGFPETVPIRTVNRQCSSGLQAVADVAASIKAGFYDIGIGAGLELMTVDNIGRVQQRNTKVDTFAQARDCLLPMGITSENVAQRFGVTRLEQDQAAVNSHQRAAAATASGKFKDEIIPVLTKIVDPQTGKEKPVVISVDDGIRPNTNLTSLGKLKPAFKNDGTTTAGNASQVSDGAAAVLLMKRSVAMKKGLPILGVFRSFAAVGVDPAVMGIGPAVAIPPAVKSAGLDLDDIDLYEINEAFASQFVYCQKKLNLDPEKVNVNGGAMALGHPLGATGARCVATLLHEMKRRGKDCRFGVISMCIGSGMGAAAVFERGDAVDDLCNARVSNNNSFLSKDAK.

Residues M1 to C34 constitute a peroxisome transit peptide. C138 functions as the Acyl-thioester intermediate in the catalytic mechanism. Residues H393 and C425 each act as proton acceptor in the active site. Residue G427 coordinates substrate.

It belongs to the thiolase-like superfamily. Thiolase family. In terms of assembly, homodimer.

Its subcellular location is the peroxisome. It carries out the reaction an acyl-CoA + acetyl-CoA = a 3-oxoacyl-CoA + CoA. The protein operates within aromatic compound metabolism. It functions in the pathway lipid metabolism; fatty acid metabolism. In terms of biological role, component of the floral volatile benzenoid/phenylpropanoid (FVBP) biosynthetic pathway. Thiolase that catalyzes the conversion of 3-oxo-3-phenylpropionyl-CoA (benzoylacetyl-CoA) to benzoyl-CoA. This Petunia hybrida (Petunia) protein is 3-ketoacyl CoA thiolase 1, peroxisomal.